Reading from the N-terminus, the 596-residue chain is Phosphoenolpyruvate carboxykinase [GTP] (596 aa).

Residues R77 and 205 to 207 each bind substrate; that span reads YGG. Mn(2+)-binding residues include K214 and H234. S256 lines the substrate pocket. 257–262 lines the GTP pocket; sequence ACGKTN. C258 is a catalytic residue. A Mn(2+)-binding site is contributed by D283. The interval 362 to 388 is disordered; sequence KKGSTEKAAHPNSRFTAPAKNNPAISP. Substrate is bound at residue 373-375; that stretch reads NSR. GTP-binding positions include R375, R406, and 499 to 502; that span reads YGDN.

Belongs to the phosphoenolpyruvate carboxykinase [GTP] family. As to quaternary structure, monomer. It depends on Mn(2+) as a cofactor.

The protein localises to the cytoplasm. It carries out the reaction oxaloacetate + GTP = phosphoenolpyruvate + GDP + CO2. Its pathway is carbohydrate biosynthesis; gluconeogenesis. Functionally, catalyzes the conversion of oxaloacetate (OAA) to phosphoenolpyruvate (PEP), the rate-limiting step in the metabolic pathway that produces glucose from lactate and other precursors derived from the citric acid cycle. This Anaeromyxobacter dehalogenans (strain 2CP-C) protein is Phosphoenolpyruvate carboxykinase [GTP].